A 480-amino-acid chain; its full sequence is Bifunctional protein HldE (480 aa).

A ribokinase region spans residues 1-316 (MNMHDFSKTK…EQLNASMRHQ (316 aa)). 192–195 (NQGE) is an ATP binding site. Asp-261 is a catalytic residue. The cytidylyltransferase stretch occupies residues 342 to 480 (FTNGCFDLLH…EAEIKEGAAQ (139 aa)).

The protein in the N-terminal section; belongs to the carbohydrate kinase PfkB family. It in the C-terminal section; belongs to the cytidylyltransferase family. Homodimer.

The enzyme catalyses D-glycero-beta-D-manno-heptose 7-phosphate + ATP = D-glycero-beta-D-manno-heptose 1,7-bisphosphate + ADP + H(+). It carries out the reaction D-glycero-beta-D-manno-heptose 1-phosphate + ATP + H(+) = ADP-D-glycero-beta-D-manno-heptose + diphosphate. The protein operates within nucleotide-sugar biosynthesis; ADP-L-glycero-beta-D-manno-heptose biosynthesis; ADP-L-glycero-beta-D-manno-heptose from D-glycero-beta-D-manno-heptose 7-phosphate: step 1/4. It participates in nucleotide-sugar biosynthesis; ADP-L-glycero-beta-D-manno-heptose biosynthesis; ADP-L-glycero-beta-D-manno-heptose from D-glycero-beta-D-manno-heptose 7-phosphate: step 3/4. In terms of biological role, catalyzes the phosphorylation of D-glycero-D-manno-heptose 7-phosphate at the C-1 position to selectively form D-glycero-beta-D-manno-heptose-1,7-bisphosphate. Functionally, catalyzes the ADP transfer from ATP to D-glycero-beta-D-manno-heptose 1-phosphate, yielding ADP-D-glycero-beta-D-manno-heptose. The chain is Bifunctional protein HldE from Hydrogenovibrio crunogenus (strain DSM 25203 / XCL-2) (Thiomicrospira crunogena).